The following is a 1518-amino-acid chain: Putative cellulose synthase 3 (1518 aa).

The tract at residues 1–731 is catalytic; the sequence is MYGTWFTTGK…EEKLEKQSFV (731 aa). Helical transmembrane passes span 24–44, 71–91, and 105–125; these read PVWVPVVLGVVLMAFVGSVRI, ITVFLMMLSLLVSLRYIVWRL, and LAVLLLLAEAYALMTLCLSYF. The catalytic subdomain A stretch occupies residues 144 to 237; it reads QWPSVDVFVP…FAVIFDCDHV (94 aa). Active-site residues include Asp-186 and Asp-330. Residues 314–374 are catalytic subdomain B; the sequence is EAVMGIGGFA…GQRVRWARGM (61 aa). 5 helical membrane passes run 404–424, 428–448, 465–485, 514–534, and 543–563; these read FLFAIPRLTFLVSPLAFLFLG, IAASPLAISVYALPHIFHSVI, IYETSLALFLVRITIVTLLQP, ILAGVLCAALLRGVFGIVWQF, and FILNTLWVVISLIIVLASIAV. The 100-residue stretch at 569-668 folds into the PilZ domain; that stretch reads QTRNAPRVSV…ERQVVSMVFG (100 aa). The tract at residues 732-1518 is cyclic di-GMP binding domain; it reads LKPVPRSARH…IARDDLTGEL (787 aa). The interval 765–785 is disordered; the sequence is APSPDQSGVTAETPFGDSNTG. Polar residues predominate over residues 768 to 785; sequence PDQSGVTAETPFGDSNTG. The helical transmembrane segment at 1481–1501 threads the bilayer; the sequence is ALYLAGLAGAGLAALGVWAWL.

This sequence in the N-terminal section; belongs to the glycosyltransferase 2 family. In the C-terminal section; belongs to the AcsB/BcsB family.

The protein resides in the cell inner membrane. The catalysed reaction is [(1-&gt;4)-beta-D-glucosyl](n) + UDP-alpha-D-glucose = [(1-&gt;4)-beta-D-glucosyl](n+1) + UDP + H(+). It functions in the pathway glycan metabolism; bacterial cellulose biosynthesis. In Komagataeibacter xylinus (Gluconacetobacter xylinus), this protein is Putative cellulose synthase 3 (bcsABII-B).